We begin with the raw amino-acid sequence, 353 residues long: Rhodopsin (353 aa).

At 1–36 (MNGTEGENFYIPFSNKTGLARSPFEYPQYYLAEPWK) the chain is on the extracellular side. 2 N-linked (GlcNAc...) asparagine glycosylation sites follow: asparagine 2 and asparagine 15. Residues 37–61 (YSVLAAYMFFLILVGFPVNFLTLFV) form a helical membrane-spanning segment. Residues 62–73 (TVQHKKLRTPLN) are Cytoplasmic-facing. Residues 74-96 (YILLNLAVANLFMVLFGFTLTMY) form a helical membrane-spanning segment. Over 97-110 (SSMNGYFVFGPTMC) the chain is Extracellular. Cysteine 110 and cysteine 187 form a disulfide bridge. A helical membrane pass occupies residues 111 to 133 (NFEGFFATLGGEMSLWSLVVLAI). The 'Ionic lock' involved in activated form stabilization signature appears at 134 to 136 (ERY). Over 134 to 152 (ERYIVICKPMGNFRFGSTH) the chain is Cytoplasmic. Residues 153 to 173 (AYMGVAFTWFMALSCAAPPLV) form a helical membrane-spanning segment. Topologically, residues 174–202 (GWSRYLPEGMQCSCGPDYYTLNPNFNNES) are extracellular. A helical membrane pass occupies residues 203–224 (FVIYMFLVHFIIPFIVIFFCYG). At 225–252 (RLLCTVKEAAAAQQESASTQKAEKEVTR) the chain is on the cytoplasmic side. The chain crosses the membrane as a helical span at residues 253–274 (MVVLMVIGFLVCWVPYASVAFY). Residues 275–286 (IFTHQGSDFGAT) are Extracellular-facing. Residues 287-308 (FMTVPAFFAKTSALYNPIIYIL) traverse the membrane as a helical segment. The residue at position 296 (lysine 296) is an N6-(retinylidene)lysine. At 309-353 (MNKQFRNCMITTLCCGKNPLGDEDSGASTSKTEVSSVSTSQVSPA) the chain is on the cytoplasmic side. A disordered region spans residues 330 to 353 (DEDSGASTSKTEVSSVSTSQVSPA). A compositionally biased stretch (low complexity) spans 336–353 (STSKTEVSSVSTSQVSPA).

Belongs to the G-protein coupled receptor 1 family. Opsin subfamily. In terms of processing, phosphorylated on some or all of the serine and threonine residues present in the C-terminal region. Contains one covalently linked retinal chromophore.

It is found in the membrane. It localises to the cell projection. Its subcellular location is the cilium. The protein localises to the photoreceptor outer segment. Functionally, photoreceptor required for image-forming vision at low light intensity. While most salt water fish species use retinal as chromophore, most freshwater fish use 3-dehydroretinal, or a mixture of retinal and 3-dehydroretinal. Light-induced isomerization of 11-cis to all-trans retinal triggers a conformational change that activates signaling via G-proteins. Subsequent receptor phosphorylation mediates displacement of the bound G-protein alpha subunit by arrestin and terminates signaling. The protein is Rhodopsin (RHO) of Petromyzon marinus (Sea lamprey).